The chain runs to 138 residues: Host cell factor C1 regulator 1 (138 aa).

The segment at 76–79 (DHPY) is interaction with HCFC1. The Nuclear export signal signature appears at 110–119 (IPEALRLLRL).

Interacts with HCFC1. As to expression, widely expressed.

It is found in the cytoplasm. It localises to the nucleus. In terms of biological role, regulates HCFC1 activity by modulating its subcellular localization. Overexpression of HCFC1R1 leads to accumulation of HCFC1 in the cytoplasm. HCFC1R1-mediated export may provide the pool of cytoplasmic HCFC1 required for import of virion-derived VP16 into the nucleus. This is Host cell factor C1 regulator 1 (HCFC1R1) from Homo sapiens (Human).